Reading from the N-terminus, the 408-residue chain is Energy-coupling factor transporter ATP-binding protein EcfA1 (408 aa).

An ABC transporter domain is found at 140-374; sequence IEIKNLSFKY…KEFLRNIQLD (235 aa). 174–181 provides a ligand contact to ATP; sequence GHNGSGKS.

Belongs to the ABC transporter superfamily. Energy-coupling factor EcfA family. Forms a stable energy-coupling factor (ECF) transporter complex composed of 2 membrane-embedded substrate-binding proteins (S component), 2 ATP-binding proteins (A component) and 2 transmembrane proteins (T component).

It localises to the cell membrane. Functionally, ATP-binding (A) component of a common energy-coupling factor (ECF) ABC-transporter complex. Unlike classic ABC transporters this ECF transporter provides the energy necessary to transport a number of different substrates. In Mycoplasma capricolum subsp. capricolum (strain California kid / ATCC 27343 / NCTC 10154), this protein is Energy-coupling factor transporter ATP-binding protein EcfA1.